The following is a 128-amino-acid chain: KETAAMKFQRQHMDSGSSLSSSSDYCNKMMKVRNMTQESCKPVNTFVHESLQDVQAVCFQENVTCKNGQQNCHQSRSNMHITDCRQTSGSKYPNCLYQTSNMNRHIIIACEGNPYVPVHFDASVEDST.

Positions 1 to 20 are disordered; it reads KETAAMKFQRQHMDSGSSLS. 2 residues coordinate substrate: Lys7 and Arg10. The active-site Proton acceptor is the His12. 4 cysteine pairs are disulfide-bonded: Cys26-Cys84, Cys40-Cys95, Cys58-Cys110, and Cys65-Cys72. A glycan (N-linked (GlcNAc...) asparagine) is linked at Asn34. Substrate is bound by residues 41-45, Lys66, and Arg85; that span reads KPVNT. The active-site Proton donor is the His119.

Belongs to the pancreatic ribonuclease family. Monomer. Interacts with and forms tight 1:1 complexes with RNH1. Dimerization of two such complexes may occur. Interaction with RNH1 inhibits this protein. Pancreas.

It localises to the secreted. The catalysed reaction is an [RNA] containing cytidine + H2O = an [RNA]-3'-cytidine-3'-phosphate + a 5'-hydroxy-ribonucleotide-3'-[RNA].. It carries out the reaction an [RNA] containing uridine + H2O = an [RNA]-3'-uridine-3'-phosphate + a 5'-hydroxy-ribonucleotide-3'-[RNA].. Its function is as follows. Endonuclease that catalyzes the cleavage of RNA on the 3' side of pyrimidine nucleotides. Acts on single-stranded and double-stranded RNA. The polypeptide is Ribonuclease pancreatic (RNASE1) (Choloepus hoffmanni (Hoffmann's two-fingered sloth)).